Reading from the N-terminus, the 368-residue chain is uncharacterized protein (368 aa).

In terms of biological role, might be involved in sporulation. This is an uncharacterized protein from Brachyspira hyodysenteriae (strain ATCC 49526 / WA1).